A 445-amino-acid polypeptide reads, in one-letter code: 3-phosphoshikimate 1-carboxyvinyltransferase (445 aa).

The interval 1–24 (MEHAATLPQTSRRPATPLTGTITV) is disordered. Over residues 7 to 22 (LPQTSRRPATPLTGTI) the composition is skewed to polar residues. The 3-phosphoshikimate site is built by K28, S29, and R33. K28 lines the phosphoenolpyruvate pocket. Phosphoenolpyruvate is bound by residues G101 and R129. 3-phosphoshikimate is bound by residues S174, Q176, D326, and K353. Q176 lines the phosphoenolpyruvate pocket. Catalysis depends on D326, which acts as the Proton acceptor. Phosphoenolpyruvate contacts are provided by R357 and R399.

Belongs to the EPSP synthase family. Monomer.

It localises to the cytoplasm. The enzyme catalyses 3-phosphoshikimate + phosphoenolpyruvate = 5-O-(1-carboxyvinyl)-3-phosphoshikimate + phosphate. It functions in the pathway metabolic intermediate biosynthesis; chorismate biosynthesis; chorismate from D-erythrose 4-phosphate and phosphoenolpyruvate: step 6/7. Functionally, catalyzes the transfer of the enolpyruvyl moiety of phosphoenolpyruvate (PEP) to the 5-hydroxyl of shikimate-3-phosphate (S3P) to produce enolpyruvyl shikimate-3-phosphate and inorganic phosphate. This Acidiphilium cryptum (strain JF-5) protein is 3-phosphoshikimate 1-carboxyvinyltransferase.